Reading from the N-terminus, the 126-residue chain is Holo-[acyl-carrier-protein] synthase (126 aa).

Positions 9 and 58 each coordinate Mg(2+).

It belongs to the P-Pant transferase superfamily. AcpS family. It depends on Mg(2+) as a cofactor.

It is found in the cytoplasm. It carries out the reaction apo-[ACP] + CoA = holo-[ACP] + adenosine 3',5'-bisphosphate + H(+). Transfers the 4'-phosphopantetheine moiety from coenzyme A to a Ser of acyl-carrier-protein. The protein is Holo-[acyl-carrier-protein] synthase of Yersinia enterocolitica serotype O:8 / biotype 1B (strain NCTC 13174 / 8081).